A 220-amino-acid polypeptide reads, in one-letter code: MRIVLVGPPGAGKGTQAAFLAKNLGIPHISTGDLFRANISQQTELGKLAKSYMDEGNLVPDEVTIAMAKDRMEQPDAVNGFLLDGFPRNVKQAEALDEMLKSEGMKLDAVLDLEVPEDEVVKRIAGRRICRNDSAHVFHVSYKPPKQEGVCDVCGGELYQRDDDSEETVRRRLEVYHTQTEPIIDYYRAQGLVVTISALGPVEEVTQRAMDALKREDASK.

Residue 10–15 (GAGKGT) coordinates ATP. An NMP region spans residues 30 to 59 (STGDLFRANISQQTELGKLAKSYMDEGNLV). Residues Thr31, Arg36, 57-59 (NLV), 85-88 (GFPR), and Gln92 each bind AMP. Residues 126-164 (GRRICRNDSAHVFHVSYKPPKQEGVCDVCGGELYQRDDD) are LID. Residues Arg127 and 137-138 (VF) contribute to the ATP site. AMP is bound by residues Arg161 and Arg172. Gly200 is an ATP binding site.

Belongs to the adenylate kinase family. As to quaternary structure, monomer.

The protein resides in the cytoplasm. It catalyses the reaction AMP + ATP = 2 ADP. It participates in purine metabolism; AMP biosynthesis via salvage pathway; AMP from ADP: step 1/1. Its function is as follows. Catalyzes the reversible transfer of the terminal phosphate group between ATP and AMP. Plays an important role in cellular energy homeostasis and in adenine nucleotide metabolism. This Streptomyces avermitilis (strain ATCC 31267 / DSM 46492 / JCM 5070 / NBRC 14893 / NCIMB 12804 / NRRL 8165 / MA-4680) protein is Adenylate kinase.